A 365-amino-acid chain; its full sequence is Aminomethyltransferase (365 aa).

Belongs to the GcvT family. The glycine cleavage system is composed of four proteins: P, T, L and H.

The enzyme catalyses N(6)-[(R)-S(8)-aminomethyldihydrolipoyl]-L-lysyl-[protein] + (6S)-5,6,7,8-tetrahydrofolate = N(6)-[(R)-dihydrolipoyl]-L-lysyl-[protein] + (6R)-5,10-methylene-5,6,7,8-tetrahydrofolate + NH4(+). Its function is as follows. The glycine cleavage system catalyzes the degradation of glycine. In Geobacillus thermodenitrificans (strain NG80-2), this protein is Aminomethyltransferase.